The primary structure comprises 402 residues: Arginine deiminase (402 aa).

The active-site Amidino-cysteine intermediate is the Cys-392.

Belongs to the arginine deiminase family.

Its subcellular location is the cytoplasm. The enzyme catalyses L-arginine + H2O = L-citrulline + NH4(+). Its pathway is amino-acid degradation; L-arginine degradation via ADI pathway; carbamoyl phosphate from L-arginine: step 1/2. This Mycolicibacterium gilvum (strain PYR-GCK) (Mycobacterium gilvum (strain PYR-GCK)) protein is Arginine deiminase.